Here is a 738-residue protein sequence, read N- to C-terminus: MLGAIREPPIDVQIALHSRDDNQTGLVLRGTRRTVDRVLKGLCSSPCFFCSVSLTMATLTTTMATTATMATTEASKPLEAQARTALTKATNYAWEIFSNRHWCGELESNVTVTCEHIFFLYVLYQHIDPGEGSQYRQWLLSQQNSDGSWGIAPNYPGDISTSAEAYLALRIIGMSTDSPELYRARTFIRAAGGLSKMRMFTRIFFAEFGLVPWTAIPQLPAEFILVPAHFPISIYRLASWARSNVVPLLIIAHHRPLYPLPNGLHKQNPFLDELWLDPATKPLPYGSSDPTDPVAFVFTILDKALSYLGGLRRSPTRGYARRRCVQWILQHQEKAGDWAGIIPPMHAGIKALLLEGYKLHDEPIQLGLAAIERFTWADNRGKRLQCCISPVWDTVLMIRALQDTPASLGIKLDPRIADALAWTAENQHRGPEGDWRVYKPNIPVGGWAFEYHNTWYPDIDDTAAAVLAFLTHDPATARSRLVRDAVLWIVGMQNADGGWAAFDHENNQLFLNKIPFSDMESLCDPSTPDVTGRTIECLGMLRDLLMRPAENAENGEKYGYPDGEGDAAADAHLLQIINTACARAIPYLIRSQEATGTWYGRWAVNYVYGTCLVLCGLQYFKHDPKFAPEIQAMAARAVKWLKQVQNSDGGWGESLLSYREPWRAGCGPSTPSQTAWALMGILTVCGGEDRSVQRGVRHLVDTQDDTLSQGDGGAAAWTEREFTIREPLHEASQRIGSD.

PFTB repeat units follow at residues 132-173 and 321-361; these read GSQY…RIIG and RRRC…KLHD. Asp-460 acts as the Proton donor in catalysis. 3 PFTB repeats span residues 482-523, 581-621, and 634-675; these read VRDA…ESLC, CARA…QYFK, and AARA…SQTA.

It belongs to the terpene cyclase/mutase family.

Its pathway is secondary metabolite biosynthesis. Squalene hopane cyclase; part of the gene cluster that mediates the biosynthesis fumihopaside A, a hopane-type glucoside that enhances the thermotolerance and UV resistance of N.fumigata. The first step of fumihopaside A biosynthesis is performed by the squalene hopane cyclase afumA that catalyzes the cyclization of 3S-oxidosqualene into the hopene 21-beta-H-hopane-3-beta,22-diol. The cytochrome P450 monooxygenase afumB is responsible for both hydroxylation at C-24 and oxidations at C-30 of the afumA product. The glycosyltransferase afumC then catalyzes the glycosylation at C-24, using UDP-D-glucose as a donor, to produce fumihopaside A. AfumC is also able to accept UDP-D-galactose and UDP-D-glucuronic acid as donors to yield minor derivatives. Fumihopaside B, another minor derivative produced, is different from fumihopaside A due to the presence of a double bond between C-22 and C-29. The polypeptide is Squalene hopane cyclase afumA (Aspergillus fumigatus (strain CBS 144.89 / FGSC A1163 / CEA10) (Neosartorya fumigata)).